The sequence spans 452 residues: Ribosome biogenesis protein YTM1 (452 aa).

A ubiquitin-like (UBL) domain region spans residues I17 to E98. WD repeat units follow at residues P110 to I148, A150 to A195, and L208 to V247. The disordered stretch occupies residues D245–V269. Residues L252–V269 show a composition bias toward basic and acidic residues. WD repeat units lie at residues S282–T322, A325–T364, M371–A411, and G418–V452.

The protein belongs to the WD repeat WDR12/YTM1 family. Component of the NOP7 complex, composed of ERB1, NOP7 and YTM1. The complex is held together by ERB1, which interacts with NOP7 via its N-terminal domain and with YTM1 via a high-affinity interaction between the seven-bladed beta-propeller domains of the 2 proteins. The NOP7 complex associates with the 66S pre-ribosome. Interacts (via UBL domain) with MDN1 (via VWFA/MIDAS domain).

It localises to the nucleus. Its subcellular location is the nucleolus. It is found in the nucleoplasm. In terms of biological role, component of the NOP7 complex, which is required for maturation of the 25S and 5.8S ribosomal RNAs and formation of the 60S ribosome. The protein is Ribosome biogenesis protein YTM1 of Laccaria bicolor (strain S238N-H82 / ATCC MYA-4686) (Bicoloured deceiver).